Here is a 510-residue protein sequence, read N- to C-terminus: MTQKIEQSQRQERVAAWNRRAECDLAAFQNSPKQTYQAEKARDRKLCANLEEAIRRSGLQDGMTVSFHHAFRGGDLTVNMVMDVIAKMGFKNLTLASSSLSDCHAPLVEHIRQGVVTRIYTSGLRGPLAEEISRGLLAEPVQIHSHGGRVHLVQSGELNIDVAFLGVPSCDEFGNANGYTGKACCGSLGYAIVDADNAKQVVMLTEELLPYPHNPASIEQDQVDLIVKVDRVGDAAKIGAGATRMTTNPRELLIARSAADVIVNSGYFKEGFSMQTGTGGASLAVTRFLEDKMRSRDIRADFALGGITATMVDLHEKGLIRKLLDVQSFDSHAAQSLARNPNHIEISANQYANWGSKGASVDRLDVVVLSALEIDTQFNVNVLTGSDGVLRGASGGHCDTAIASALSIIVAPLVRGRIPTLVDNVLTCITPGSSVDILVTDHGIAVNPARPELAERLQEAGIKVVSIEWLRERARLLTGEPQPIEFTDRVVAVVRYRDGSVIDVVHQVKE.

In terms of assembly, oligomer with a subunit composition of (alpha,beta,gamma)6.

It is found in the cytoplasm. The enzyme catalyses citrate = oxaloacetate + acetate. The catalysed reaction is citrate + acetyl-CoA = (3S)-citryl-CoA + acetate. Functionally, represents a citrate:acetyl-ACP transferase. The polypeptide is Citrate lyase alpha chain (citF) (Escherichia coli (strain K12)).